A 350-amino-acid chain; its full sequence is S-adenosylmethionine:tRNA ribosyltransferase-isomerase (350 aa).

It belongs to the QueA family. Monomer.

It localises to the cytoplasm. It carries out the reaction 7-aminomethyl-7-carbaguanosine(34) in tRNA + S-adenosyl-L-methionine = epoxyqueuosine(34) in tRNA + adenine + L-methionine + 2 H(+). Its pathway is tRNA modification; tRNA-queuosine biosynthesis. Transfers and isomerizes the ribose moiety from AdoMet to the 7-aminomethyl group of 7-deazaguanine (preQ1-tRNA) to give epoxyqueuosine (oQ-tRNA). This is S-adenosylmethionine:tRNA ribosyltransferase-isomerase from Bacillus cereus (strain Q1).